A 420-amino-acid polypeptide reads, in one-letter code: Histidine--tRNA ligase (420 aa).

This sequence belongs to the class-II aminoacyl-tRNA synthetase family. As to quaternary structure, homodimer.

It is found in the cytoplasm. The enzyme catalyses tRNA(His) + L-histidine + ATP = L-histidyl-tRNA(His) + AMP + diphosphate + H(+). This Macrococcus caseolyticus (strain JCSC5402) (Macrococcoides caseolyticum) protein is Histidine--tRNA ligase.